Consider the following 370-residue polypeptide: MSEITHRTKTRPVKVGPLTIGGNNEVVIQSMTTTKTHDVEATVAEINRLAEAGCQIVRVACPDERAADAIPEIKKRISIPLVVDIHFNYKLALKAIEGGADKIRINPGNIGRREKVEAVVNAAKEKGIPIRIGVNAGSLEKRILEKYGYPTADGMVESALHHIKILEDLDFHDIIVSMKASDVNLAIEAYEKAAKAFDYPLHLGITESGTLFAGTVKSAAGLGAILSKGIGNTLRISLSADPVEEVKVARELLKSFGLASNAATLISCPTCGRIEIDLISIANEVEDYIAKIKAPIKVAVLGCAVNGPGEAREADIGIAGARGEGLLFRKGEIVRKVPEETMVEELKKEIDKLAEEHYAKQAAEKEKLNT.

[4Fe-4S] cluster contacts are provided by Cys268, Cys271, Cys303, and Glu310.

It belongs to the IspG family. [4Fe-4S] cluster is required as a cofactor.

The enzyme catalyses (2E)-4-hydroxy-3-methylbut-2-enyl diphosphate + oxidized [flavodoxin] + H2O + 2 H(+) = 2-C-methyl-D-erythritol 2,4-cyclic diphosphate + reduced [flavodoxin]. The protein operates within isoprenoid biosynthesis; isopentenyl diphosphate biosynthesis via DXP pathway; isopentenyl diphosphate from 1-deoxy-D-xylulose 5-phosphate: step 5/6. In terms of biological role, converts 2C-methyl-D-erythritol 2,4-cyclodiphosphate (ME-2,4cPP) into 1-hydroxy-2-methyl-2-(E)-butenyl 4-diphosphate. This chain is 4-hydroxy-3-methylbut-2-en-1-yl diphosphate synthase (flavodoxin), found in Bacillus licheniformis (strain ATCC 14580 / DSM 13 / JCM 2505 / CCUG 7422 / NBRC 12200 / NCIMB 9375 / NCTC 10341 / NRRL NRS-1264 / Gibson 46).